Consider the following 285-residue polypeptide: Protein unc-1 (285 aa).

2 consecutive transmembrane segments (helical) span residues 27–47 and 69–89; these read IGTI…IVTF and IGRL…IPCI.

The protein belongs to the band 7/mec-2 family.

The protein resides in the cell membrane. The protein localises to the cell junction. Its subcellular location is the gap junction. The polypeptide is Protein unc-1 (unc-1) (Caenorhabditis elegans).